The sequence spans 133 residues: Ribosome-binding factor A (133 aa).

Belongs to the RbfA family. In terms of assembly, monomer. Binds 30S ribosomal subunits, but not 50S ribosomal subunits or 70S ribosomes.

The protein resides in the cytoplasm. Its function is as follows. One of several proteins that assist in the late maturation steps of the functional core of the 30S ribosomal subunit. Associates with free 30S ribosomal subunits (but not with 30S subunits that are part of 70S ribosomes or polysomes). Required for efficient processing of 16S rRNA. May interact with the 5'-terminal helix region of 16S rRNA. This Shigella boydii serotype 18 (strain CDC 3083-94 / BS512) protein is Ribosome-binding factor A.